A 418-amino-acid polypeptide reads, in one-letter code: Glutamyl-tRNA reductase (418 aa).

Residues 49 to 52 (TCNR), S109, 114 to 116 (EPQ), and Q120 each bind substrate. Residue C50 is the Nucleophile of the active site. 189–194 (GAGETI) provides a ligand contact to NADP(+).

It belongs to the glutamyl-tRNA reductase family. In terms of assembly, homodimer.

The catalysed reaction is (S)-4-amino-5-oxopentanoate + tRNA(Glu) + NADP(+) = L-glutamyl-tRNA(Glu) + NADPH + H(+). It participates in porphyrin-containing compound metabolism; protoporphyrin-IX biosynthesis; 5-aminolevulinate from L-glutamyl-tRNA(Glu): step 1/2. Its function is as follows. Catalyzes the NADPH-dependent reduction of glutamyl-tRNA(Glu) to glutamate 1-semialdehyde (GSA). The protein is Glutamyl-tRNA reductase of Citrobacter koseri (strain ATCC BAA-895 / CDC 4225-83 / SGSC4696).